The primary structure comprises 443 residues: UDP-N-acetylmuramate--L-alanine ligase (443 aa).

ATP is bound at residue 111 to 117 (GAHGKTS).

Belongs to the MurCDEF family.

It localises to the cytoplasm. It catalyses the reaction UDP-N-acetyl-alpha-D-muramate + L-alanine + ATP = UDP-N-acetyl-alpha-D-muramoyl-L-alanine + ADP + phosphate + H(+). The protein operates within cell wall biogenesis; peptidoglycan biosynthesis. Cell wall formation. This Levilactobacillus brevis (strain ATCC 367 / BCRC 12310 / CIP 105137 / JCM 1170 / LMG 11437 / NCIMB 947 / NCTC 947) (Lactobacillus brevis) protein is UDP-N-acetylmuramate--L-alanine ligase.